We begin with the raw amino-acid sequence, 406 residues long: Homocysteine-responsive endoplasmic reticulum-resident ubiquitin-like domain member 2 protein (406 aa).

In terms of domain architecture, Ubiquitin-like spans 10–89 (VTLIIKAPNQ…HMVHLVCTSR (80 aa)). The disordered stretch occupies residues 86-154 (CTSRTPPSSP…TLPQAQTDQA (69 aa)). Composition is skewed to low complexity over residues 87 to 98 (TSRTPPSSPKSS) and 106 to 126 (ALAS…PSSG). Residues 127-154 (QETLSLAVGSSSEGLRQRTLPQAQTDQA) are compositionally biased toward polar residues. A helical transmembrane segment spans residues 302–322 (FIMVMGAMLLVYLHQAGWFPF).

It is found in the membrane. Could be involved in the unfolded protein response (UPR) pathway. The chain is Homocysteine-responsive endoplasmic reticulum-resident ubiquitin-like domain member 2 protein (HERPUD2) from Homo sapiens (Human).